Reading from the N-terminus, the 549-residue chain is Cation/acetate symporter ActP (549 aa).

13 helical membrane passes run Trp33–Ala53, Gly76–Val96, Gly103–Glu123, Leu149–Ala169, Ile183–Ala203, Trp206–Val226, Ile262–Leu282, Gly303–Val323, Leu355–Leu375, Val404–Glu424, Ile428–Leu448, Ile463–Trp483, and Ile493–Phe513.

Belongs to the sodium:solute symporter (SSF) (TC 2.A.21) family.

The protein resides in the cell inner membrane. Its function is as follows. Transports acetate. This chain is Cation/acetate symporter ActP, found in Enterobacter sp. (strain 638).